A 101-amino-acid chain; its full sequence is Apolipoprotein C-II (101 aa).

An N-terminal signal peptide occupies residues 1–22; it reads MGTRYLLVLLLVLLVLGFEVQG. Residues 66–74 are lipid binding; the sequence is TMDEKIRDI. The segment at 78–101 is lipoprotein lipase cofactor; sequence STAAVSTYAGIFTDQLLSMLKGDS.

This sequence belongs to the apolipoprotein C2 family. In terms of processing, proapolipoprotein C-II is synthesized as a sialic acid containing glycoprotein which is subsequently desialylated prior to its proteolytic processing. Post-translationally, proapolipoprotein C-II, the major form found in plasma undergoes proteolytic cleavage of its N-terminal hexapeptide to generate apolipoprotein C-II, which occurs as the minor form in plasma. Highly expressed in the liver. Moderately expressed in the ileum, jejunum and ovary.

It is found in the secreted. Component of chylomicrons, very low-density lipoproteins (VLDL), low-density lipoproteins (LDL), and high-density lipoproteins (HDL) in plasma. Plays an important role in lipoprotein metabolism as an activator of lipoprotein lipase. Both proapolipoprotein C-II and apolipoprotein C-II can activate lipoprotein lipase. In Canis lupus familiaris (Dog), this protein is Apolipoprotein C-II (APOC2).